The sequence spans 88 residues: Sec-independent protein translocase protein TatA (88 aa).

The chain crosses the membrane as a helical span at residues 1–21 (MNLGPTEILLILVIVVLLFGA). Residues 46–56 (SNDDQRYEEQQ) show a composition bias toward basic and acidic residues. Residues 46-88 (SNDDQRYEEQQQQRQIAAQAQQQVVNPVEIPQPQPTDIQRPQQ) form a disordered region. Residues 57–68 (QQRQIAAQAQQQ) show a composition bias toward low complexity.

This sequence belongs to the TatA/E family. In terms of assembly, the Tat system comprises two distinct complexes: a TatABC complex, containing multiple copies of TatA, TatB and TatC subunits, and a separate TatA complex, containing only TatA subunits. Substrates initially bind to the TatABC complex, which probably triggers association of the separate TatA complex to form the active translocon.

It is found in the cell membrane. Part of the twin-arginine translocation (Tat) system that transports large folded proteins containing a characteristic twin-arginine motif in their signal peptide across membranes. TatA could form the protein-conducting channel of the Tat system. This is Sec-independent protein translocase protein TatA from Corynebacterium diphtheriae (strain ATCC 700971 / NCTC 13129 / Biotype gravis).